Consider the following 203-residue polypeptide: Linker for activation of T-cells family member 2 (203 aa).

Topologically, residues 1 to 6 are extracellular; that stretch reads MSAELE. The chain crosses the membrane as a helical; Signal-anchor for type III membrane protein span at residues 7–27; the sequence is LLWPVSGLLLLLLGATAWLCV. S-palmitoyl cysteine attachment occurs at residues cysteine 26 and cysteine 29. Topologically, residues 28–203 are cytoplasmic; sequence HCSRPGVKRN…NGDVAAAENI (176 aa). Tyrosine 59 is modified (phosphotyrosine). Phosphoserine occurs at positions 60 and 95. Residues tyrosine 139, tyrosine 160, and tyrosine 192 each carry the phosphotyrosine modification. The tract at residues 171–203 is disordered; it reads ESKRTMGAPMSLSGSPDEEPDYVNGDVAAAENI.

When phosphorylated, interacts with GRB2. May also interact with SOS1, GAB1 and CBL. In terms of processing, phosphorylated on tyrosines following cross-linking of BCR in B-cells, high affinity IgG receptor (FCGR1) in myeloid cells, or high affinity IgE receptor (FCER1) in mast cells; which induces the recruitment of GRB2. Strongly expressed in testis. Expressed in heart, spleen and lung. Present in B-cells and mast cells (at protein level).

It is found in the cell membrane. In terms of biological role, involved in FCER1 (high affinity immunoglobulin epsilon receptor)-mediated signaling in mast cells. May also be involved in BCR (B-cell antigen receptor)-mediated signaling in B-cells and FCGR1 (high affinity immunoglobulin gamma Fc receptor I)-mediated signaling in myeloid cells. Couples activation of these receptors and their associated kinases with distal intracellular events through the recruitment of GRB2. In Mus musculus (Mouse), this protein is Linker for activation of T-cells family member 2 (Lat2).